The sequence spans 312 residues: Malate dehydrogenase (312 aa).

NAD(+) is bound by residues 7 to 13 and Asp34; that span reads GAAGGIG. Substrate is bound by residues Arg81 and Arg87. NAD(+) is bound by residues Asn94 and 117-119; that span reads ITN. Asn119 and Arg153 together coordinate substrate. The Proton acceptor role is filled by His177. Met227 serves as a coordination point for NAD(+).

It belongs to the LDH/MDH superfamily. MDH type 1 family. In terms of assembly, homodimer.

The enzyme catalyses (S)-malate + NAD(+) = oxaloacetate + NADH + H(+). Its function is as follows. Catalyzes the reversible oxidation of malate to oxaloacetate. The sequence is that of Malate dehydrogenase from Cronobacter sakazakii (strain ATCC BAA-894) (Enterobacter sakazakii).